We begin with the raw amino-acid sequence, 985 residues long: Alpha-glucosidase (985 aa).

Residues 1 to 25 (MVKLTHLLARAWLVPLAYGASQSLL) form the signal peptide. Residue Thr36 is glycosylated (O-linked (Man) threonine). Asn124, Asn143, Asn218, Asn347, and Asn422 each carry an N-linked (GlcNAc...) asparagine glycan. Asp490 serves as the catalytic Nucleophile. Glu493 is an active-site residue. N-linked (GlcNAc...) asparagine glycosylation is found at Asn506, Asn534, and Asn537. 2 O-linked (Man) serine glycosylation sites follow: Ser545 and Ser550. O-linked (Man) threonine glycosylation occurs at Thr559. Ser560 is a glycosylation site (O-linked (Man) serine). Residue Thr561 is glycosylated (O-linked (Man) threonine). The O-linked (Man) serine glycan is linked to Ser562. Thr571 carries an O-linked (Man) threonine glycan. Asn601 and Asn623 each carry an N-linked (GlcNAc...) asparagine glycan. Catalysis depends on Asp660, which acts as the Proton donor. Asn835 and Asn881 each carry an N-linked (GlcNAc...) asparagine glycan. An O-linked (Man) serine glycan is attached at Ser895. Residues Asn899, Asn957, and Asn970 are each glycosylated (N-linked (GlcNAc...) asparagine).

The protein belongs to the glycosyl hydrolase 31 family. The O-linked saccharide is not identified, but is probably mannose.

It catalyses the reaction Hydrolysis of terminal, non-reducing (1-&gt;4)-linked alpha-D-glucose residues with release of alpha-D-glucose.. Its function is as follows. Hydrolyzes malto-oligosaccharides, but has a low activity toward soluble starch. This chain is Alpha-glucosidase (aglA), found in Aspergillus niger.